Consider the following 76-residue polypeptide: Beta-defensin 121 (76 aa).

A signal peptide spans 1–15; sequence MKLLLLLLTVTLLLA. 3 disulfides stabilise this stretch: Cys-23–Cys-50, Cys-30–Cys-44, and Cys-34–Cys-51.

This sequence belongs to the beta-defensin family.

Its subcellular location is the secreted. In terms of biological role, has antibacterial activity. The sequence is that of Beta-defensin 121 (DEFB121) from Pan troglodytes (Chimpanzee).